The chain runs to 376 residues: 4-hydroxy-3-methylbut-2-enyl diphosphate reductase (376 aa).

Cys19 serves as a coordination point for [4Fe-4S] cluster. His48 and His99 together coordinate (2E)-4-hydroxy-3-methylbut-2-enyl diphosphate. Residues His48 and His99 each coordinate dimethylallyl diphosphate. The isopentenyl diphosphate site is built by His48 and His99. Residue Cys121 participates in [4Fe-4S] cluster binding. Position 149 (His149) interacts with (2E)-4-hydroxy-3-methylbut-2-enyl diphosphate. Position 149 (His149) interacts with dimethylallyl diphosphate. His149 contributes to the isopentenyl diphosphate binding site. Glu151 serves as the catalytic Proton donor. Thr208 provides a ligand contact to (2E)-4-hydroxy-3-methylbut-2-enyl diphosphate. Cys236 provides a ligand contact to [4Fe-4S] cluster. Residues Ser264, Asn266, and Ser307 each coordinate (2E)-4-hydroxy-3-methylbut-2-enyl diphosphate. 3 residues coordinate dimethylallyl diphosphate: Ser264, Asn266, and Ser307. Isopentenyl diphosphate contacts are provided by Ser264, Asn266, and Ser307.

The protein belongs to the IspH family. The cofactor is [4Fe-4S] cluster.

It catalyses the reaction isopentenyl diphosphate + 2 oxidized [2Fe-2S]-[ferredoxin] + H2O = (2E)-4-hydroxy-3-methylbut-2-enyl diphosphate + 2 reduced [2Fe-2S]-[ferredoxin] + 2 H(+). The enzyme catalyses dimethylallyl diphosphate + 2 oxidized [2Fe-2S]-[ferredoxin] + H2O = (2E)-4-hydroxy-3-methylbut-2-enyl diphosphate + 2 reduced [2Fe-2S]-[ferredoxin] + 2 H(+). It participates in isoprenoid biosynthesis; dimethylallyl diphosphate biosynthesis; dimethylallyl diphosphate from (2E)-4-hydroxy-3-methylbutenyl diphosphate: step 1/1. The protein operates within isoprenoid biosynthesis; isopentenyl diphosphate biosynthesis via DXP pathway; isopentenyl diphosphate from 1-deoxy-D-xylulose 5-phosphate: step 6/6. Functionally, catalyzes the conversion of 1-hydroxy-2-methyl-2-(E)-butenyl 4-diphosphate (HMBPP) into a mixture of isopentenyl diphosphate (IPP) and dimethylallyl diphosphate (DMAPP). Acts in the terminal step of the DOXP/MEP pathway for isoprenoid precursor biosynthesis. This Treponema pallidum (strain Nichols) protein is 4-hydroxy-3-methylbut-2-enyl diphosphate reductase.